The primary structure comprises 604 residues: Beta-(1--&gt;2)glucan export ATP-binding/permease protein NdvA (604 aa).

Positions 21 to 311 (GWILAFANLL…VVSFINSVFM (291 aa)) constitute an ABC transmembrane type-1 domain. A run of 6 helical transmembrane segments spans residues 22 to 42 (WILA…PVLF), 68 to 88 (LLGA…AVAL), 146 to 166 (EHFA…YINW), 168 to 188 (LAIL…LVVH), 238 to 258 (LLAL…ITRA), and 285 to 305 (IVMF…VVSF). One can recognise an ABC transporter domain in the interval 345–579 (VEFKDVSFSY…QGHFAALARA (235 aa)). ATP is bound at residue 378–385 (GATGAGKS).

This sequence belongs to the ABC transporter superfamily. Beta-(1--&gt;2)glucan exporter (TC 3.A.1.108.1) family. Homodimer.

It is found in the cell inner membrane. The enzyme catalyses [(1-&gt;2)-beta-D-glucosyl](n)(in) + ATP + H2O = [(1-&gt;2)-beta-D-glucosyl](n)(out) + ADP + phosphate + H(+). In terms of biological role, involved in beta-(1--&gt;2)glucan export. Transmembrane domains (TMD) form a pore in the inner membrane and the ATP-binding domain (NBD) is responsible for energy generation. This Rhodopseudomonas palustris (strain BisB18) protein is Beta-(1--&gt;2)glucan export ATP-binding/permease protein NdvA.